Here is a 999-residue protein sequence, read N- to C-terminus: Probable K(+)/H(+) antiporter subunit A/B (999 aa).

A disordered region spans residues 1-20 (MTRPASVLAGPKSRPPIHSQ). Helical transmembrane passes span 31 to 48 (LLSVFILVPFAGSLIAIF), 63 to 85 (AIALVCFLVTAGLYPYVASGGVL), 106 to 128 (FAWLFSALITAIGVLVALYARYY), 138 to 160 (FFALFLAFMGSMLGVVLSGNLIL), 162 to 181 (AVFWELTSIVSFLLIGYWHH), 191 to 213 (MALTITGTGGLAMFVGLIIIGKI), 233 to 255 (PLYGTVLVLVLLGALTKSAQFPF), 270 to 292 (SAYLHSATMVKAGVFLLVRFWPV), 299 to 321 (WFWIVGLAGLTTLLLGAYFAIFQ), 336 to 358 (LGLITVLLSLGSPLAAVAAVFHI), 389 to 411 (GLFHFMPITATLAMVASAAMAGV), 442 to 464 (YVATIAGMFAVTYSLRFIHGVFF), 488 to 510 (FLVLACLVVGIIPAQTIGPFLHT), 530 to 552 (GWNIPLIMSFVALSGGIGLYFLM), 604 to 621 (RLLVFLALAAGASPLLLG), 636 to 653 (AFALLWAIGIACAIGSAY), 660 to 682 (LASLVLLGGAGLVTCITFVWLSA), 686 to 708 (AVTQLLVEIVTTVLILLGLRWLP), 729 to 751 (LRDLLLAIGAGGGMMLIAYTVMT), 788 to 807 (TLGEIAVLCIVALTVFALLL), 846 to 868 (FIPAVIMRWMFPVTGMLAAFLFL), 878 to 900 (FAAGIAMSIGFILQYMSGGTRWV), 913 to 935 (SIGLLVATATGVGSWFFGYPFLT), and 955 to 977 (ILFDLGVFSLVLGATVLILIALA).

In the N-terminal section; belongs to the CPA3 antiporters (TC 2.A.63) subunit A family. It in the C-terminal section; belongs to the CPA3 antiporters (TC 2.A.63) subunit B family. In terms of assembly, may form a heterooligomeric complex that consists of six subunits: PhaAB, PhaC, PhaD, PhaE, PhaF and PhaG.

It localises to the cell membrane. Functionally, part of a K(+) efflux system which is required for the adaptation of R.meliloti to alkaline pH as well as for the infection process during symbiotic nodule development. The chain is Probable K(+)/H(+) antiporter subunit A/B (phaAB) from Rhizobium meliloti (strain 1021) (Ensifer meliloti).